The following is a 289-amino-acid chain: HTH-type transcriptional regulator HexR (289 aa).

In terms of domain architecture, HTH rpiR-type spans 1–77 (MNMLEKIQSQ…LHLAQSLANG (77 aa)). Residues 37–56 (IAAMALEANVSEPTVNRFCR) constitute a DNA-binding region (H-T-H motif). The region spanning 121–260 (AVDLLTQAKK…ATGFTLRRGA (140 aa)) is the SIS domain.

Its function is as follows. Represses the expression of the hex regulon (zwf, eda, glp and gap). This Escherichia coli (strain K12) protein is HTH-type transcriptional regulator HexR (hexR).